The sequence spans 377 residues: MIRGNDPILLTPGPLTTSLATKQAMLRDWGSWDAAFNTITRSLCDDLVRIVHGEGTHVCVPMQGSGTFSVEAAIANVVPRDGKVLVPQNGAYCQRILKICKVLGRASVELPIPEDQPASAALIEDALRRDPSITHVAQVHCETGAGVLNPLQDIALLCQRLGKGLIVDAMSSFGAIEIDARTMPFDALVAATGKCIEGVPGMGFVLVKKDVLEASQGNSHSLALDLHDQYVYMQKTTQWRFTPPTHVVAAFRAALDQFLEEGGQPVRGARYRRNCDTLVKGMAALGFRTFLPTAVQAPIIVTFHAPADARYDFKTFYAKVRERGYILYPGKLTQVETFRVGCIGAIDDNEMRNVVTAIGEVLREMGIEMQGRLAEAA.

Lysine 194 carries the post-translational modification N6-(pyridoxal phosphate)lysine.

Belongs to the class-V pyridoxal-phosphate-dependent aminotransferase family. PhnW subfamily. In terms of assembly, homodimer. Requires pyridoxal 5'-phosphate as cofactor.

It catalyses the reaction (2-aminoethyl)phosphonate + pyruvate = phosphonoacetaldehyde + L-alanine. In terms of biological role, involved in phosphonate degradation. This Cupriavidus taiwanensis (strain DSM 17343 / BCRC 17206 / CCUG 44338 / CIP 107171 / LMG 19424 / R1) (Ralstonia taiwanensis (strain LMG 19424)) protein is 2-aminoethylphosphonate--pyruvate transaminase.